The chain runs to 800 residues: MASTNVTGQCPGPMKATSNGAFQNESPLDFALPLIILQIVLVVVFTRLLAYFLKPLKQPRVIAEIIGGILLGPSALGRSKAYLDTIFPKKSLTVLDTLANIGLLFFLFLVGLELDFAAIKKTGKKSLLIAIAGISLPFIVGVGTSFVLSATISKGVDQLPFIVFMGVALSITAFPVLARILAELKLLTTDIGRMAMSAAGVNDVAAWILLALAIALSGDGTSPLVSVWVLLCGTGFVIFAVVAIKPLLAYMARRCPEGEPVKELYVCVTLTVVLAASFVTDTIGIHALFGAFVVGIVAPKEGPFCRILTEKIEDLVSGLLLPLYFAASGLKTDVTTIRGAQSWGLLVLVILTTCFGKIVGTVGSSMLCKVPFREAVTLGFLMNTKGLVELIVLNIGKDRKVLNDQAFAILVLMALFTTFITTPIVMLIYKPARKGAPYKHRTIQRKDHDSELRILACFHSTRNIPTLINLIESSRGTGKKGRLCVYAMHLMELSERSSAIAMVHKARNNGLPIWNKIERSTDQMVIAFEAYQHLRAVAVRPMTAISGLSSIHEDICTSAHQKRVAMILLPFHKHQRMDGAMESIGHRFHEVNQRVLQRAPCSVGILVDRGLGGTSQVVASEVAYKVVIPFFGGLDDREALAYGMKMVEHPGITLTVYKFVAARGTLKRFEKSEHDEKEKKEKETDEEFVRELMNDPRGNESLAYEERVVESKDDIIATLKSMSKCNLFVVGRNAAVASLVKSTDCPELGPVGRLLSSSEFSTTASVLVVQGYDPAADTRPLVEEDAEYDQSSRDISDLTA.

Transmembrane regions (helical) follow at residues 30–50 (FALP…RLLA), 60–77 (RVIA…SALG), 92–112 (LTVL…LVGL), 127–147 (LLIA…TSFV), 158–178 (QLPF…PVLA), 196–216 (MSAA…AIAL), 224–244 (LVSV…VVAI), 278–298 (FVTD…GIVA), 315–335 (LVSG…TDVT), 343–363 (WGLL…GTVG), 375–395 (AVTL…VLNI), and 408–428 (AILV…VMLI). The tract at residues 776–800 (ADTRPLVEEDAEYDQSSRDISDLTA) is disordered. Over residues 790 to 800 (QSSRDISDLTA) the composition is skewed to basic and acidic residues.

The protein belongs to the monovalent cation:proton antiporter 2 (CPA2) transporter (TC 2.A.37) family. CHX (TC 2.A.37.4) subfamily. In terms of tissue distribution, expressed in the whole plant but preferentially in pollen.

Its subcellular location is the membrane. Its function is as follows. May operate as a cation/H(+) antiporter. The chain is Cation/H(+) antiporter 19 (CHX19) from Arabidopsis thaliana (Mouse-ear cress).